Reading from the N-terminus, the 340-residue chain is Fructose-1,6-bisphosphatase, cytosolic (340 aa).

E71, E100, D121, L123, and D124 together coordinate Mg(2+). Residues 124 to 127 (DGSS), N215, Y247, Y267, and K277 contribute to the substrate site. E283 serves as a coordination point for Mg(2+).

This sequence belongs to the FBPase class 1 family. Mg(2+) is required as a cofactor.

The protein resides in the cytoplasm. The enzyme catalyses beta-D-fructose 1,6-bisphosphate + H2O = beta-D-fructose 6-phosphate + phosphate. This Solanum tuberosum (Potato) protein is Fructose-1,6-bisphosphatase, cytosolic.